A 352-amino-acid polypeptide reads, in one-letter code: MDYQVSSPTYDIDYYTSEPCQKINVKQIAGRLLPPLYSLVFIFGFVGNILVVLILINCKRLKSMTDIYLLNLAISDLLFLLTVPFWAHYAAAQWDFGNTMCQLLTGLYFIGFFSGIFFIILLTIDRYLAIVHAVFALKARTVTFGVVTSVITWVVAVFASLPGIIFTRSQREGLHYTCSSHFPYSQYQFWKNFQTLKIVILGLVLPLLVMVICYSGILKTLLRCRNEKKRHRAVRLIFTIMIVYFLFWAPYNIVLLLNTFQEFFGLNNCSSSNRLDQAMQVTETLGMTHCCINPIIYAFVGEKFRNYLLVFFQKHIAKRFCKCCSIFQQEAPERASSVYTRSTGEQEISVGL.

Residues 1–30 (MDYQVSSPTYDIDYYTSEPCQKINVKQIAG) are Extracellular-facing. Tyr-3 bears the Sulfotyrosine mark. O-linked (GalNAc...) serine glycans are attached at residues Ser-6 and Ser-7. 3 positions are modified to sulfotyrosine: Tyr-10, Tyr-14, and Tyr-15. Cystine bridges form between Cys-20–Cys-269 and Cys-101–Cys-178. A helical membrane pass occupies residues 31–58 (RLLPPLYSLVFIFGFVGNILVVLILINC). At 59-68 (KRLKSMTDIY) the chain is on the cytoplasmic side. Residues 69-89 (LLNLAISDLLFLLTVPFWAHY) traverse the membrane as a helical segment. Residues 90–102 (AAAQWDFGNTMCQ) are Extracellular-facing. Residues 103–124 (LLTGLYFIGFFSGIFFIILLTI) traverse the membrane as a helical segment. Residues 125–141 (DRYLAIVHAVFALKART) lie on the Cytoplasmic side of the membrane. A helical membrane pass occupies residues 142 to 166 (VTFGVVTSVITWVVAVFASLPGIIF). Topologically, residues 167–198 (TRSQREGLHYTCSSHFPYSQYQFWKNFQTLKI) are extracellular. The helical transmembrane segment at 199-218 (VILGLVLPLLVMVICYSGIL) threads the bilayer. Topologically, residues 219–235 (KTLLRCRNEKKRHRAVR) are cytoplasmic. Residues 236–260 (LIFTIMIVYFLFWAPYNIVLLLNTF) traverse the membrane as a helical segment. Over 261–277 (QEFFGLNNCSSSNRLDQ) the chain is Extracellular. Residues 278-301 (AMQVTETLGMTHCCINPIIYAFVG) traverse the membrane as a helical segment. Residues 302–352 (EKFRNYLLVFFQKHIAKRFCKCCSIFQQEAPERASSVYTRSTGEQEISVGL) lie on the Cytoplasmic side of the membrane. S-palmitoyl cysteine attachment occurs at residues Cys-321, Cys-323, and Cys-324. Phosphoserine; by BARK1 is present on residues Ser-336, Ser-337, Ser-342, and Ser-349.

This sequence belongs to the G-protein coupled receptor 1 family. Interacts with PRAF2. Efficient ligand binding to CCL3/MIP-1alpha and CCL4/MIP-1beta requires sulfation, O-glycosylation and sialic acid modifications. Glycosylation on Ser-6 is required for efficient binding of CCL4. Interacts with GRK2. Interacts with ARRB1 and ARRB2. Interacts with CNIH4. Interacts with S100A4; this interaction stimulates T-lymphocyte chemotaxis. Post-translationally, sulfated on at least 2 of the N-terminal tyrosines. Sulfation is required for efficient binding of the chemokines, CCL3 and CCL4. In terms of processing, palmitoylation in the C-terminal is important for cell surface expression. Phosphorylation on serine residues in the C-terminal is stimulated by binding CC chemokines especially by APO-RANTES. Post-translationally, O-glycosylated, but not N-glycosylated. Ser-6 appears to be the major site even if Ser-7 may be also O-glycosylated. Also sialylated glycans present which contribute to chemokine binding. Thr-16 and Ser-17 may also be glycosylated and, if so, with small moieties such as a T-antigen.

The protein localises to the cell membrane. Its function is as follows. Receptor for a number of inflammatory CC-chemokines including CCL3/MIP-1-alpha, CCL4/MIP-1-beta and RANTES and subsequently transduces a signal by increasing the intracellular calcium ion level. May play a role in the control of granulocytic lineage proliferation or differentiation. Participates in T-lymphocyte migration to the infection site by acting as a chemotactic receptor. The polypeptide is C-C chemokine receptor type 5 (CCR5) (Theropithecus gelada (Gelada baboon)).